The sequence spans 417 residues: Phosphoglycerate kinase (417 aa).

Residues V23, D24, F25, N26, Q39, R40, S63, H64, G66, R67, L122, R123, H170, and R171 each contribute to the (2R)-3-phosphoglycerate site. Residue G214 coordinates ADP. G214 is a binding site for CDP. 2 residues coordinate AMP: A215 and K216. Residue A215 coordinates ATP. Mg(2+) is bound at residue A215. D219 contacts CDP. D219 serves as a coordination point for Mg(2+). K220 lines the AMP pocket. K220 is an ATP binding site. G238 is an ADP binding site. G238 lines the CDP pocket. 2 residues coordinate AMP: G239 and G313. Positions 239 and 313 each coordinate ATP. G338, A340, and F343 together coordinate CDP. F343 contributes to the ADP binding site. Residue E344 participates in AMP binding. Residues E344, D375, and T376 each coordinate ATP. A Mg(2+)-binding site is contributed by D375.

Belongs to the phosphoglycerate kinase family. Monomer. The cofactor is Mg(2+).

The protein localises to the cytoplasm. The protein resides in the mitochondrion. It catalyses the reaction (2R)-3-phosphoglycerate + ATP = (2R)-3-phospho-glyceroyl phosphate + ADP. The protein operates within carbohydrate degradation; glycolysis; pyruvate from D-glyceraldehyde 3-phosphate: step 2/5. Its function is as follows. Catalyzes one of the two ATP producing reactions in the glycolytic pathway via the reversible conversion of 1,3-diphosphoglycerate to 3-phosphoglycerate. Both L- and D- forms of purine and pyrimidine nucleotides can be used as substrates, but the activity is much lower on pyrimidines. Negatively regulates the biosynthesis of acetyl-CoA from pyruvate in the mitochondrion. The polypeptide is Phosphoglycerate kinase (pgk1) (Hypocrea rufa (Trichoderma viride)).